The chain runs to 354 residues: Uroporphyrinogen decarboxylase (354 aa).

Residues 27–31, Asp-77, Tyr-154, Thr-209, and His-327 contribute to the substrate site; that span reads RQAGR.

Belongs to the uroporphyrinogen decarboxylase family. In terms of assembly, homodimer.

The protein localises to the cytoplasm. The catalysed reaction is uroporphyrinogen III + 4 H(+) = coproporphyrinogen III + 4 CO2. It participates in porphyrin-containing compound metabolism; protoporphyrin-IX biosynthesis; coproporphyrinogen-III from 5-aminolevulinate: step 4/4. In terms of biological role, catalyzes the decarboxylation of four acetate groups of uroporphyrinogen-III to yield coproporphyrinogen-III. The sequence is that of Uroporphyrinogen decarboxylase from Serratia proteamaculans (strain 568).